The chain runs to 441 residues: Protein translocase subunit SecY (441 aa).

10 helical membrane passes run 25-45 (YFVIFSLIVFRMGSYIPIPGI), 78-98 (IFALGIMPFISSSIIVQILTL), 126-146 (LILAALQSFGMSISLPNIPGL), 155-175 (ISFYGIAIISLITGTIFLMWL), 184-204 (IGNGISIIIFSGIVSGLPSSF), 218-238 (VLLFCFIGIVIFLVTLLVVYI), 275-295 (VIPAIFASSIVLFPATIASWF), 318-338 (YILTYITAIIFFCFFYTGLAF), 376-396 (FLGSMYMAFICLVPELMRFFM), and 398-418 (VPFYFGGTSLLIIVVVIIDFI).

Belongs to the SecY/SEC61-alpha family. As to quaternary structure, component of the Sec protein translocase complex. Heterotrimer consisting of SecY, SecE and SecG subunits. The heterotrimers can form oligomers, although 1 heterotrimer is thought to be able to translocate proteins. Interacts with the ribosome. Interacts with SecDF, and other proteins may be involved. Interacts with SecA.

The protein resides in the cell membrane. Functionally, the central subunit of the protein translocation channel SecYEG. Consists of two halves formed by TMs 1-5 and 6-10. These two domains form a lateral gate at the front which open onto the bilayer between TMs 2 and 7, and are clamped together by SecE at the back. The channel is closed by both a pore ring composed of hydrophobic SecY resides and a short helix (helix 2A) on the extracellular side of the membrane which forms a plug. The plug probably moves laterally to allow the channel to open. The ring and the pore may move independently. In Buchnera aphidicola subsp. Baizongia pistaciae (strain Bp), this protein is Protein translocase subunit SecY.